Here is a 532-residue protein sequence, read N- to C-terminus: Phosphoenolpyruvate carboxykinase (ATP) (532 aa).

Positions 58, 194, and 200 each coordinate substrate. ATP-binding positions include Lys200, His220, and 236 to 244 (GLSGTGKTT). 2 residues coordinate Mn(2+): Lys200 and His220. Residue Asp257 participates in Mn(2+) binding. Residues Glu285, Arg322, 442 to 443 (RV), and Thr448 each bind ATP. Arg322 contributes to the substrate binding site.

It belongs to the phosphoenolpyruvate carboxykinase (ATP) family. Mn(2+) is required as a cofactor.

It localises to the cytoplasm. It carries out the reaction oxaloacetate + ATP = phosphoenolpyruvate + ADP + CO2. Its pathway is carbohydrate biosynthesis; gluconeogenesis. In terms of biological role, involved in the gluconeogenesis. Catalyzes the conversion of oxaloacetate (OAA) to phosphoenolpyruvate (PEP) through direct phosphoryl transfer between the nucleoside triphosphate and OAA. The polypeptide is Phosphoenolpyruvate carboxykinase (ATP) (Rubrobacter xylanophilus (strain DSM 9941 / JCM 11954 / NBRC 16129 / PRD-1)).